The following is a 245-amino-acid chain: Ribosomal RNA small subunit methyltransferase G (245 aa).

S-adenosyl-L-methionine contacts are provided by residues Gly-85, Phe-90, Asp-108–Thr-110, Ala-136–Glu-137, and Arg-155.

The protein belongs to the methyltransferase superfamily. RNA methyltransferase RsmG family.

It is found in the cytoplasm. Its function is as follows. Specifically methylates the N7 position of a guanine in 16S rRNA. This chain is Ribosomal RNA small subunit methyltransferase G, found in Trichormus variabilis (strain ATCC 29413 / PCC 7937) (Anabaena variabilis).